The following is a 127-amino-acid chain: Small ribosomal subunit protein uS11 (127 aa).

It belongs to the universal ribosomal protein uS11 family. As to quaternary structure, part of the 30S ribosomal subunit. Interacts with proteins S7 and S18. Binds to IF-3.

Functionally, located on the platform of the 30S subunit, it bridges several disparate RNA helices of the 16S rRNA. Forms part of the Shine-Dalgarno cleft in the 70S ribosome. The protein is Small ribosomal subunit protein uS11 of Rhodopirellula baltica (strain DSM 10527 / NCIMB 13988 / SH1).